We begin with the raw amino-acid sequence, 237 residues long: Nodulation protein NolA (237 aa).

In terms of domain architecture, HTH merR-type spans 10–79; it reads RWRIGELAEA…LVEIRKAMEG (70 aa). Positions 13–32 form a DNA-binding region, H-T-H motif; the sequence is IGELAEATGVTVRTLHHYEH.

Functionally, involved in genotype-specific nodulation of soybeans. In Bradyrhizobium diazoefficiens (strain JCM 10833 / BCRC 13528 / IAM 13628 / NBRC 14792 / USDA 110), this protein is Nodulation protein NolA (nolA).